Here is an 89-residue protein sequence, read N- to C-terminus: MSLSATQKQEVITSYQVHETDTGSADLQVALLTTRISQLTGHLQQNPKDHASRRGLLKMIGRRRRLLSYINSKDSQRYQDLIKRLGIRR.

The protein belongs to the universal ribosomal protein uS15 family. Part of the 30S ribosomal subunit. Forms a bridge to the 50S subunit in the 70S ribosome, contacting the 23S rRNA.

Its function is as follows. One of the primary rRNA binding proteins, it binds directly to 16S rRNA where it helps nucleate assembly of the platform of the 30S subunit by binding and bridging several RNA helices of the 16S rRNA. Functionally, forms an intersubunit bridge (bridge B4) with the 23S rRNA of the 50S subunit in the ribosome. In Rippkaea orientalis (strain PCC 8801 / RF-1) (Cyanothece sp. (strain PCC 8801)), this protein is Small ribosomal subunit protein uS15.